The sequence spans 766 residues: Phosphoribosylformylglycinamidine synthase subunit PurL (766 aa).

Histidine 49 is a catalytic residue. Tyrosine 52 and lysine 91 together coordinate ATP. Glutamate 93 is a Mg(2+) binding site. Residues 94–97 (SHNH) and arginine 116 contribute to the substrate site. Catalysis depends on histidine 95, which acts as the Proton acceptor. Residue aspartate 117 coordinates Mg(2+). Glutamine 240 is a substrate binding site. Aspartate 268 contributes to the Mg(2+) binding site. Residue 312–314 (ESQ) participates in substrate binding. ATP-binding residues include aspartate 508 and glycine 545. Asparagine 546 lines the Mg(2+) pocket. Position 548 (serine 548) interacts with substrate.

It belongs to the FGAMS family. In terms of assembly, monomer. Part of the FGAM synthase complex composed of 1 PurL, 1 PurQ and 2 PurS subunits.

It is found in the cytoplasm. The catalysed reaction is N(2)-formyl-N(1)-(5-phospho-beta-D-ribosyl)glycinamide + L-glutamine + ATP + H2O = 2-formamido-N(1)-(5-O-phospho-beta-D-ribosyl)acetamidine + L-glutamate + ADP + phosphate + H(+). Its pathway is purine metabolism; IMP biosynthesis via de novo pathway; 5-amino-1-(5-phospho-D-ribosyl)imidazole from N(2)-formyl-N(1)-(5-phospho-D-ribosyl)glycinamide: step 1/2. Its function is as follows. Part of the phosphoribosylformylglycinamidine synthase complex involved in the purines biosynthetic pathway. Catalyzes the ATP-dependent conversion of formylglycinamide ribonucleotide (FGAR) and glutamine to yield formylglycinamidine ribonucleotide (FGAM) and glutamate. The FGAM synthase complex is composed of three subunits. PurQ produces an ammonia molecule by converting glutamine to glutamate. PurL transfers the ammonia molecule to FGAR to form FGAM in an ATP-dependent manner. PurS interacts with PurQ and PurL and is thought to assist in the transfer of the ammonia molecule from PurQ to PurL. The sequence is that of Phosphoribosylformylglycinamidine synthase subunit PurL from Synechococcus sp. (strain CC9902).